We begin with the raw amino-acid sequence, 230 residues long: Cytidylate kinase (230 aa).

12 to 20 provides a ligand contact to ATP; it reads GPSGAGKGT.

It belongs to the cytidylate kinase family. Type 1 subfamily.

The protein localises to the cytoplasm. The catalysed reaction is CMP + ATP = CDP + ADP. It carries out the reaction dCMP + ATP = dCDP + ADP. The polypeptide is Cytidylate kinase (Shewanella sp. (strain MR-4)).